The chain runs to 446 residues: MSNTVFIGAKEYFPGIGKIGFEGRDSDNPLAFKVYDANKQVAGKTMAEHLRFAVAYWHSFCGNGADPFGPGTRAYPWDVGNTALARAEAKSDAAFEFFTKLGVPYYCFHDIDLAPDADDIGEYENNLKHMVGIAKQRQADTGVKLLWGTANLFSHPRYMNGASTNPDFNVVARAAVQVKAAIDATVELGGENYVFWGGREGYACLHNTQMKREQDNMARFLTLARDYGRAIGFKGNFLIEPKPMEPMKHQYDFDSATVIGFLRQHGLDQDFKLNIEANHATLSGHSFEHDLQVASDAGLLGSIDANRGNPQNGWDTDQFPTDLYDTVGAMLVVLRQGGLAPGGLNFDAKVRRESSDPQDLFLAHIGGMDAFARGLEVADALLTSSPLETWRAQRYASFDSGAGADFANGTSTLADLATYAAGKGEPTQLSGRQEAYENLINQYLTR.

Catalysis depends on residues H109 and D112. 7 residues coordinate Mg(2+): E240, E276, H279, D304, D315, D317, and D347.

It belongs to the xylose isomerase family. In terms of assembly, homotetramer. Mg(2+) is required as a cofactor.

The protein localises to the cytoplasm. The catalysed reaction is alpha-D-xylose = alpha-D-xylulofuranose. The chain is Xylose isomerase 2 from Xanthomonas campestris pv. campestris (strain 8004).